We begin with the raw amino-acid sequence, 599 residues long: Sulfite reductase [NADPH] flavoprotein alpha-component (599 aa).

The Flavodoxin-like domain occupies 63 to 201 (ITVISASQTG…LATAWRKQVV (139 aa)). FMN contacts are provided by residues 69–74 (SQTGNA), 116–119 (STQG), and 152–161 (LGDTSYENFC). The FAD-binding FR-type domain maps to 234 to 448 (EQPLTAQLAV…IEHNDNFRLP (215 aa)). Residues threonine 322, histidine 356, 386 to 389 (RLYS), 404 to 406 (TVG), tyrosine 410, and 419 to 422 (GGAS) contribute to the FAD site. NADP(+) contacts are provided by residues 519–520 (SR), 525–529 (KVYVQ), and aspartate 561. Tyrosine 599 lines the FAD pocket.

It belongs to the NADPH-dependent sulphite reductase flavoprotein subunit CysJ family. The protein in the N-terminal section; belongs to the flavodoxin family. In the C-terminal section; belongs to the flavoprotein pyridine nucleotide cytochrome reductase family. As to quaternary structure, alpha(8)-beta(8). The alpha component is a flavoprotein, the beta component is a hemoprotein. It depends on FAD as a cofactor. The cofactor is FMN.

The enzyme catalyses hydrogen sulfide + 3 NADP(+) + 3 H2O = sulfite + 3 NADPH + 4 H(+). It functions in the pathway sulfur metabolism; hydrogen sulfide biosynthesis; hydrogen sulfide from sulfite (NADPH route): step 1/1. Component of the sulfite reductase complex that catalyzes the 6-electron reduction of sulfite to sulfide. This is one of several activities required for the biosynthesis of L-cysteine from sulfate. The flavoprotein component catalyzes the electron flow from NADPH -&gt; FAD -&gt; FMN to the hemoprotein component. This Serratia proteamaculans (strain 568) protein is Sulfite reductase [NADPH] flavoprotein alpha-component.